We begin with the raw amino-acid sequence, 417 residues long: Serine hydroxymethyltransferase (417 aa).

(6S)-5,6,7,8-tetrahydrofolate contacts are provided by residues L121 and 125–127 (GHL). K230 is modified (N6-(pyridoxal phosphate)lysine). Position 355 to 357 (355 to 357 (SPF)) interacts with (6S)-5,6,7,8-tetrahydrofolate.

The protein belongs to the SHMT family. As to quaternary structure, homodimer. It depends on pyridoxal 5'-phosphate as a cofactor.

It localises to the cytoplasm. The catalysed reaction is (6R)-5,10-methylene-5,6,7,8-tetrahydrofolate + glycine + H2O = (6S)-5,6,7,8-tetrahydrofolate + L-serine. It participates in one-carbon metabolism; tetrahydrofolate interconversion. Its pathway is amino-acid biosynthesis; glycine biosynthesis; glycine from L-serine: step 1/1. In terms of biological role, catalyzes the reversible interconversion of serine and glycine with tetrahydrofolate (THF) serving as the one-carbon carrier. This reaction serves as the major source of one-carbon groups required for the biosynthesis of purines, thymidylate, methionine, and other important biomolecules. Also exhibits THF-independent aldolase activity toward beta-hydroxyamino acids, producing glycine and aldehydes, via a retro-aldol mechanism. In Nitrosococcus oceani (strain ATCC 19707 / BCRC 17464 / JCM 30415 / NCIMB 11848 / C-107), this protein is Serine hydroxymethyltransferase.